Consider the following 331-residue polypeptide: MVTASSSVRVSNEDECFIYDIEQLKDNVVVSYSTGSWSCFDKGTLLEIFKVPKAHTNITGIISCDQLNGVITCGSEGEIHLWDIRSQAKSAVRSWTQQSTPFTCIALNKKNQFATGSELTRSLASVQLWDVRSEQKLIRQWNDAHNDDITHLQFHPKDNELLLTGSVDGLVSLLDTTKEEDSTDPEEDPLLHVINHGASIHLAKFVSKKRVMVLSHMESYAMYKLKRDKDEKTWSSNELFSIDDLRAELSCSYVINEVSTSDKQFCALAFGDFSNHETKFVLVDTSTGELKKEPTKLERASEEICRAISFDVKNDVYYSGGEDGLLQAFRV.

WD repeat units follow at residues 53–92, 97–139, 144–184, and 300–331; these read KAHTNITGIISCDQLNGVITCGSEGEIHLWDIRSQAKSAV, QQST…KLIR, AHND…DSTD, and ASEEICRAISFDVKNDVYYSGGEDGLLQAFRV.

The protein resides in the cytoplasm. It is found in the nucleus. This is an uncharacterized protein from Schizosaccharomyces pombe (strain 972 / ATCC 24843) (Fission yeast).